The chain runs to 419 residues: MTTPLLQDLQDRGLIAQASDLEEIQTLLSQPQTVYCGFDPTAGSLHIGHLVPLIMLKRFQDAGHQAVALIGGATGMIGDPSFKATERSLNSAEIVSGWVNDLSNQIQQLMNHQLSKPMIMVNNADWMRAINVIDFFRDVGKHFSINTMINRESVKQRLQRPDQGISFTEFSYALLQSYDFAELNRQYGCRLQIGGNDQWGNIVSGIDLTRRQNGEQVFGLTLPLITKSDGTKFGKTEGGAVWLDPSKTSPYAFYQFWLGAEDADVYHFLRYYTFLSCEEIASIEAQDQASQGKPQAQRILAEEMTRFVHGEEGLASAERITQALFSGNVQQLSLGELKQLELDGLPSIESAQQDLVELLIESGLASSKRVAREHISNNAISVNGEKVSADNPSLSFPLFDQYWLLQRGKKHFCLVKRAA.

L-tyrosine is bound at residue Y35. Residues 40–49 carry the 'HIGH' region motif; the sequence is PTAGSLHIGH. L-tyrosine contacts are provided by Y172 and Q176. The 'KMSKS' region signature appears at 232–236; sequence KFGKT. K235 serves as a coordination point for ATP. The S4 RNA-binding domain occupies 353–418; that stretch reads QDLVELLIES…KKHFCLVKRA (66 aa).

It belongs to the class-I aminoacyl-tRNA synthetase family. TyrS type 1 subfamily. As to quaternary structure, homodimer.

It is found in the cytoplasm. The enzyme catalyses tRNA(Tyr) + L-tyrosine + ATP = L-tyrosyl-tRNA(Tyr) + AMP + diphosphate + H(+). Its function is as follows. Catalyzes the attachment of tyrosine to tRNA(Tyr) in a two-step reaction: tyrosine is first activated by ATP to form Tyr-AMP and then transferred to the acceptor end of tRNA(Tyr). This is Tyrosine--tRNA ligase 1 from Vibrio parahaemolyticus serotype O3:K6 (strain RIMD 2210633).